Reading from the N-terminus, the 174-residue chain is Ribosome maturation factor RimM (174 aa).

A PRC barrel domain is found at 96-170; it reads PDEFYDHELE…YVVIDPPEGL (75 aa).

Belongs to the RimM family. As to quaternary structure, binds ribosomal protein uS19.

The protein localises to the cytoplasm. Functionally, an accessory protein needed during the final step in the assembly of 30S ribosomal subunit, possibly for assembly of the head region. Essential for efficient processing of 16S rRNA. May be needed both before and after RbfA during the maturation of 16S rRNA. It has affinity for free ribosomal 30S subunits but not for 70S ribosomes. The polypeptide is Ribosome maturation factor RimM (Nocardia farcinica (strain IFM 10152)).